The following is a 102-amino-acid chain: Small ribosomal subunit protein uS10 (102 aa).

Belongs to the universal ribosomal protein uS10 family. In terms of assembly, part of the 30S ribosomal subunit.

Its function is as follows. Involved in the binding of tRNA to the ribosomes. The chain is Small ribosomal subunit protein uS10 from Bacillus cereus (strain G9842).